The following is a 190-amino-acid chain: MLLSDRDLRAEISSGRLGIDPFDDTLVQPSSIDVRLDCLFRVFNNTRYTHIDPAKQQDELTSLVQPVDGEPFVLHPGEFVLGSTLELFTLPDNLAGRLEGKSSLGRLGLLTHSTAGFIDPGFSGHITLELSNVANLPITLWPGMKIGQLCMLRLTSPSEHPYGSSRAGSKYQGQRGPTPSRSCQNFIRST.

Residues 101 to 106 (KSSLGR), aspartate 119, 127 to 129 (TLE), glutamine 148, tyrosine 162, lysine 170, and glutamine 174 contribute to the dCTP site. Catalysis depends on glutamate 129, which acts as the Proton donor/acceptor. A disordered region spans residues 160-190 (HPYGSSRAGSKYQGQRGPTPSRSCQNFIRST). Polar residues predominate over residues 171-190 (YQGQRGPTPSRSCQNFIRST).

It belongs to the dCTP deaminase family. In terms of assembly, homotrimer.

The enzyme catalyses dCTP + 2 H2O = dUMP + NH4(+) + diphosphate. It participates in pyrimidine metabolism; dUMP biosynthesis; dUMP from dCTP: step 1/1. Its function is as follows. Bifunctional enzyme that catalyzes both the deamination of dCTP to dUTP and the hydrolysis of dUTP to dUMP without releasing the toxic dUTP intermediate. This chain is dCTP deaminase, dUMP-forming, found in Mycobacterium bovis (strain ATCC BAA-935 / AF2122/97).